The following is a 319-amino-acid chain: Homoserine O-acetyltransferase (319 aa).

The Acyl-thioester intermediate role is filled by Cys-142. Positions 163 and 192 each coordinate substrate. Catalysis depends on His-235, which acts as the Proton acceptor. The active site involves Glu-237. Arg-249 contributes to the substrate binding site.

The protein belongs to the MetA family.

The protein resides in the cytoplasm. It carries out the reaction L-homoserine + acetyl-CoA = O-acetyl-L-homoserine + CoA. It functions in the pathway amino-acid biosynthesis; L-methionine biosynthesis via de novo pathway; O-acetyl-L-homoserine from L-homoserine: step 1/1. Transfers an acetyl group from acetyl-CoA to L-homoserine, forming acetyl-L-homoserine. In Lactococcus lactis subsp. cremoris (strain MG1363), this protein is Homoserine O-acetyltransferase.